The primary structure comprises 473 residues: MKTLYSLRRFYHVETLFNGTLALAGRDQETTGFAWWAGNARLINLSGKLLGAHVAHAGLIVFWAGAMNLFEVAHFVPEKPMYEQGLILLPHLATLGWGIGPGGEVIDTFPYFVSGVLHVISSAVLGFGGIYHALLGPETLEESFPFFGYVWKDRNKMTTILGIHLILLGVGAFLLVFKALYFGGVYDTWAPGGGDVRKITNLTLSPSVIFGYLLKSPFGGEGWIVSVDDLEDIIGGHVWLGSICIFGGIWHILTKPFAWARRALVWSGEAYLSYSLAALSVCGFIACCFVWFNNTAYPSEFYGPTGPEASQAQAFTFLVRDQRLGANVGSAQGPTGLGKYLMRSPTGEVIFGGETMRFWDLRAPWLEPLRGPNGLDLSRLKKDIQPWQERRSAEYMTHAPLGSLNSVGGVATEINAVNYVSPRSWLSTSHFVLAFFLFVGHLWHAGRARAAAAGFEKGIDRDFEPVLSMTPLN.

The propeptide occupies 1 to 14 (MKTLYSLRRFYHVE). N-acetylthreonine is present on Thr15. Phosphothreonine is present on Thr15. Helical transmembrane passes span 69–93 (LFEVAHFVPEKPMYEQGLILLPHLA), 134–155 (LLGPETLEESFPFFGYVWKDRN), 178–200 (KALYFGGVYDTWAPGGGDVRKIT), 255–275 (KPFAWARRALVWSGEAYLSYS), and 291–312 (WFNNTAYPSEFYGPTGPEASQA). Glu367 is a [CaMn4O5] cluster binding site. A helical transmembrane segment spans residues 447–471 (RARAAAAGFEKGIDRDFEPVLSMTP).

The protein belongs to the PsbB/PsbC family. PsbC subfamily. PSII is composed of 1 copy each of membrane proteins PsbA, PsbB, PsbC, PsbD, PsbE, PsbF, PsbH, PsbI, PsbJ, PsbK, PsbL, PsbM, PsbT, PsbX, PsbY, PsbZ, Psb30/Ycf12, at least 3 peripheral proteins of the oxygen-evolving complex and a large number of cofactors. It forms dimeric complexes. Binds multiple chlorophylls and provides some of the ligands for the Ca-4Mn-5O cluster of the oxygen-evolving complex. It may also provide a ligand for a Cl- that is required for oxygen evolution. PSII binds additional chlorophylls, carotenoids and specific lipids. is required as a cofactor.

It localises to the plastid. Its subcellular location is the chloroplast thylakoid membrane. Functionally, one of the components of the core complex of photosystem II (PSII). It binds chlorophyll and helps catalyze the primary light-induced photochemical processes of PSII. PSII is a light-driven water:plastoquinone oxidoreductase, using light energy to abstract electrons from H(2)O, generating O(2) and a proton gradient subsequently used for ATP formation. The chain is Photosystem II CP43 reaction center protein from Aethionema cordifolium (Lebanon stonecress).